The following is a 1502-amino-acid chain: MFQSFFHNNGPAAAGETFSDSRSYPLTNHQEVPRNGLNELASSATKAQQQPTHILNSYPITGSNPLMRASAMGATSGSINPNMSNMNEHIRVSGMGTSKPLDLAGKYIDHLQHKDSNTPVLDERSYYNSGVDYNFSREKNGLGAFTPFEKQDVFNIPDEILHEFSTSQTKTDMGIFPELNRCWITIDNKLILWNINNDNEYQVVDDMKHTIQKVALVRPKPNTFVPAVKHLLLISTTMELFMFAISLDKATNELSVFNTHLSVPVQGIDVIDIVSHERSGRIFFAGQASGLNIWELHYSGSDDWFNSKCSKVCLTKSALLSLLPTNMLSQIPGVDFIQALFEDNSNGNGGFSQETITQLTIDQQRGIIYSLSSKSTIRAYVITEKSLEGPMSIEPAYISRIIGTTTARAAPILGPKYLKIVKISSVAPEENNNLFLVALTVGGVRLYFNGSMGRFNIEALRLESIKFPPSSVTPEVIQQELLHQQQEQAKRSFPFFSNLMSSEPVLLKFQKKSSVLLETTKASTIISPGIFFSAVIKSSQQTHQQEKKENSSVTGTTATAGSKTVKQQPVTLQHKLFVSVPDYGILKTHGKYVENATFLETAGPVQQIIPLSGLFNATTKPQGFANEFATQYTSETLRVAVLTSTSIEIYKYRTPDEIFEDLIDNPLPFVLNYGAAEACSTALFVTCKSNKSEKLRSNALTFLTMGIPGVVDIKPVYNRYSVSTVSSLLSKPTLSTATTNLQQSITGFSKPSPANKEDFDLDDVILSPRFYGIALLITRLLRDIWGRHVFMTFTDNRVTSHAFISSSDPITPSINNLKSDEISQNRNIISKVSISKDCIEYYLSSINILNEFFITYGDSISQISAPYVLANNSNGRVIDKTEEVANQAESIAINAMIKMVQSIKEGLSFLNVLYEESEVEGFDNQYLGFKDIISFVSLDVQKDLVKLDFKDLFAPNDKTKSLIREILLSIINRNITKGASIEYTATALQERCGSFCSASDILGFRAIEHLRRAKEIGLRNYDSLNYHLKNATALLEQIVDDLSIEKLKEAVSMMLSVNYYPKSIEFLLNIANSMDKGKLACQYVANGFLENDDRKQYYDKRILVYDLVFDTLIKVDELAEKKQSSKTQNQISISNDDEVKLRQKSYEAALKYNDRLFHYHMYDWLVSQNREEKLLDIETPFILPYLMEKAGSSLKISNILWVYYSRRSKFFESAEILYRLATSNFDITLFERIEFLSRANGFCNSVSPLSQKQRIVQLASRIQDACEVAGIQGDILSLVYTDARIDSAIKDELIKTLDGKILSTSELFNDFAVPLSYHEIALFIFKIADFRDHEVIMAKWDELFQSLRMEFNNTGKKEDSMNFINLLSNVLIKIGKNVQDSEFIFPIFELFPIVCNFFYETLPKEHIVSGSIVSIFITAGVSFNKMYYILKELIETSDSDNSVFNKEMTWLIHEWYKSDRKFRDIISYNDIIHLKEYKIDNDPIEKYVKNSGNNLGICFYKE.

A disordered region spans residues 1–31 (MFQSFFHNNGPAAAGETFSDSRSYPLTNHQE). Polar residues predominate over residues 18–30 (FSDSRSYPLTNHQ). Positions 233 to 261 (LISTTMELFMFAISLDKATNELSVFNTHL) are leucine-zipper. Position 1247 is a phosphoserine (Ser-1247).

The protein belongs to the non-repetitive/WGA-negative nucleoporin family. As to quaternary structure, component of the nuclear pore complex (NPC). NPC constitutes the exclusive means of nucleocytoplasmic transport. NPCs allow the passive diffusion of ions and small molecules and the active, nuclear transport receptor-mediated bidirectional transport of macromolecules such as proteins, RNAs, ribonucleoparticles (RNPs), and ribosomal subunits across the nuclear envelope. Due to its 8-fold rotational symmetry, all subunits are present with 8 copies or multiples thereof. During mitosis NUP53 changes its binding partner within the NPC from NUP170 to NIC96, exposing a high affinity binding site for the karyopherin PSE1, and retaining it in the NPC.

It is found in the nucleus. It localises to the nuclear pore complex. Its subcellular location is the nucleus membrane. In terms of biological role, functions as a component of the nuclear pore complex (NPC). NPC components, collectively referred to as nucleoporins (NUPs), can play the role of both NPC structural components and of docking or interaction partners for transiently associated nuclear transport factors. NUP170 probably plays an important role in NPC assembly and organization. In addition it is required for chromosome transmission fidelity. The sequence is that of Nucleoporin NUP170 (NUP170) from Saccharomyces cerevisiae (strain ATCC 204508 / S288c) (Baker's yeast).